The primary structure comprises 141 residues: Nucleoside diphosphate kinase (141 aa).

Positions 11, 59, 87, 93, 104, and 114 each coordinate ATP. The active-site Pros-phosphohistidine intermediate is the H117.

This sequence belongs to the NDK family. In terms of assembly, homotetramer. Requires Mg(2+) as cofactor.

It localises to the cytoplasm. The enzyme catalyses a 2'-deoxyribonucleoside 5'-diphosphate + ATP = a 2'-deoxyribonucleoside 5'-triphosphate + ADP. It carries out the reaction a ribonucleoside 5'-diphosphate + ATP = a ribonucleoside 5'-triphosphate + ADP. Its function is as follows. Major role in the synthesis of nucleoside triphosphates other than ATP. The ATP gamma phosphate is transferred to the NDP beta phosphate via a ping-pong mechanism, using a phosphorylated active-site intermediate. The chain is Nucleoside diphosphate kinase from Paraburkholderia xenovorans (strain LB400).